The following is a 210-amino-acid chain: Imidazoleglycerol-phosphate dehydratase (210 aa).

The segment at 185-210 (PRRGGSIPSSKGVLEQAGDNNTEKSK) is disordered.

The protein belongs to the imidazoleglycerol-phosphate dehydratase family.

It is found in the cytoplasm. The enzyme catalyses D-erythro-1-(imidazol-4-yl)glycerol 3-phosphate = 3-(imidazol-4-yl)-2-oxopropyl phosphate + H2O. It functions in the pathway amino-acid biosynthesis; L-histidine biosynthesis; L-histidine from 5-phospho-alpha-D-ribose 1-diphosphate: step 6/9. The chain is Imidazoleglycerol-phosphate dehydratase from Prochlorococcus marinus (strain SARG / CCMP1375 / SS120).